The sequence spans 174 residues: Shikimate kinase 2 (174 aa).

ATP is bound at residue 12–17 (GCGKTT). The Mg(2+) site is built by threonine 16 and aspartate 32. Substrate is bound by residues aspartate 34, arginine 58, and glycine 79. An LID domain region spans residues 112–126 (QAAPEEDLRPTLTGK). Arginine 120 serves as a coordination point for ATP. Arginine 139 provides a ligand contact to substrate.

It belongs to the shikimate kinase family. AroL subfamily. As to quaternary structure, monomer. Mg(2+) serves as cofactor.

It is found in the cytoplasm. The catalysed reaction is shikimate + ATP = 3-phosphoshikimate + ADP + H(+). The protein operates within metabolic intermediate biosynthesis; chorismate biosynthesis; chorismate from D-erythrose 4-phosphate and phosphoenolpyruvate: step 5/7. Functionally, catalyzes the specific phosphorylation of the 3-hydroxyl group of shikimic acid using ATP as a cosubstrate. The sequence is that of Shikimate kinase 2 from Shigella boydii serotype 4 (strain Sb227).